Reading from the N-terminus, the 382-residue chain is uncharacterized protein (382 aa).

12 helical membrane-spanning segments follow: residues 14–34 (GLLLLTLAIAVLNTLVPLWLA), 45–65 (VVSSSYFTGNLVGTLLTGYVI), 79–99 (FIFAAGCAGLGLMIGFWSWLA), 102–122 (FVAGVGCAMIWVVVESALMCS), 131–151 (LLAAYMMVYYVGTFLGQLLVS), 157–177 (LMSVLPWVTGLTLAGILPLLF), 204–224 (LGVNGCIISGIVLGSLYGLMP), 235–255 (ASIGFWMAVLVSAGILGQWPI), 270–290 (VQVFVVILGSIAMLSQAAMAP), 291–311 (ALFILGAAGFTLYPVAMAWAC), 325–345 (ALLLSYTVGSLLGPSFTAMLM), and 348–368 (FSDNLLFIMIASVSFIYLLML).

The protein belongs to the major facilitator superfamily. YcaD (TC 2.A.1.26) family.

It is found in the cell inner membrane. This is an uncharacterized protein from Shigella dysenteriae serotype 1 (strain Sd197).